A 272-amino-acid chain; its full sequence is NH(3)-dependent NAD(+) synthetase (272 aa).

Tyrosine 33 serves as a coordination point for deamido-NAD(+). ATP contacts are provided by residues 45–52, arginine 79, and glutamine 85; that span reads GISGGQDS. Mg(2+) is bound at residue aspartate 51. Residue arginine 138 coordinates deamido-NAD(+). Threonine 158 lines the ATP pocket. Residue glutamate 163 coordinates Mg(2+). Positions 171 and 178 each coordinate deamido-NAD(+). The ATP site is built by lysine 187 and threonine 209. Residues glutamate 224 and 258 to 259 each bind deamido-NAD(+); that span reads HK.

This sequence belongs to the NAD synthetase family. In terms of assembly, homodimer. In terms of processing, phosphorylated during sporulation.

It carries out the reaction deamido-NAD(+) + NH4(+) + ATP = AMP + diphosphate + NAD(+) + H(+). It participates in cofactor biosynthesis; NAD(+) biosynthesis; NAD(+) from deamido-NAD(+) (ammonia route): step 1/1. Functionally, catalyzes the ATP-dependent amidation of deamido-NAD to form NAD. Uses ammonia as a nitrogen source. This chain is NH(3)-dependent NAD(+) synthetase, found in Bacillus subtilis (strain 168).